The sequence spans 293 residues: Ribosomal protein L11 methyltransferase (293 aa).

S-adenosyl-L-methionine is bound by residues Thr145, Gly166, Asp188, and Asn230.

This sequence belongs to the methyltransferase superfamily. PrmA family.

Its subcellular location is the cytoplasm. The enzyme catalyses L-lysyl-[protein] + 3 S-adenosyl-L-methionine = N(6),N(6),N(6)-trimethyl-L-lysyl-[protein] + 3 S-adenosyl-L-homocysteine + 3 H(+). In terms of biological role, methylates ribosomal protein L11. The protein is Ribosomal protein L11 methyltransferase of Enterobacter sp. (strain 638).